Consider the following 130-residue polypeptide: Small ribosomal subunit protein uS8 (130 aa).

This sequence belongs to the universal ribosomal protein uS8 family. As to quaternary structure, part of the 30S ribosomal subunit. Contacts proteins S5 and S12.

Its function is as follows. One of the primary rRNA binding proteins, it binds directly to 16S rRNA central domain where it helps coordinate assembly of the platform of the 30S subunit. This Pseudoalteromonas atlantica (strain T6c / ATCC BAA-1087) protein is Small ribosomal subunit protein uS8.